We begin with the raw amino-acid sequence, 460 residues long: Kynurenine 3-monooxygenase (460 aa).

The protein belongs to the aromatic-ring hydroxylase family. KMO subfamily. Requires FAD as cofactor.

Its subcellular location is the mitochondrion. It carries out the reaction L-kynurenine + NADPH + O2 + H(+) = 3-hydroxy-L-kynurenine + NADP(+) + H2O. It functions in the pathway cofactor biosynthesis; NAD(+) biosynthesis; quinolinate from L-kynurenine: step 1/3. Functionally, catalyzes the hydroxylation of L-kynurenine (L-Kyn) to form 3-hydroxy-L-kynurenine (L-3OHKyn). Required for synthesis of quinolinic acid. The sequence is that of Kynurenine 3-monooxygenase from Dictyostelium discoideum (Social amoeba).